Reading from the N-terminus, the 193-residue chain is Ion-translocating oxidoreductase complex subunit A (193 aa).

Transmembrane regions (helical) follow at residues L5–L25, L39–I59, F62–A82, L102–L122, A134–I154, and S171–V191.

This sequence belongs to the NqrDE/RnfAE family. As to quaternary structure, the complex is composed of six subunits: RnfA, RnfB, RnfC, RnfD, RnfE and RnfG.

It is found in the cell inner membrane. In terms of biological role, part of a membrane-bound complex that couples electron transfer with translocation of ions across the membrane. The chain is Ion-translocating oxidoreductase complex subunit A from Sodalis glossinidius (strain morsitans).